A 2003-amino-acid polypeptide reads, in one-letter code: Neurogenic locus notch homolog protein 4 (2003 aa).

A signal peptide spans 1-23 (MQPPSLLLLLLLLLLLCVSVVRP). EGF-like domains lie at 24 to 63 (RGLL…ETCQ), 64 to 115 (FPDP…ERCQ), 118 to 155 (LEDP…EQCQ), and 156 to 192 (LRDF…HACE). Topologically, residues 24-1447 (RGLLCGSFPE…TAPPANQLPW (1424 aa)) are extracellular. 48 disulfide bridges follow: Cys-28/Cys-41, Cys-35/Cys-51, Cys-53/Cys-62, Cys-68/Cys-80, Cys-74/Cys-103, Cys-105/Cys-114, Cys-122/Cys-133, Cys-127/Cys-143, Cys-145/Cys-154, Cys-160/Cys-171, Cys-165/Cys-180, Cys-182/Cys-191, Cys-198/Cys-211, Cys-205/Cys-220, Cys-222/Cys-231, Cys-238/Cys-249, Cys-243/Cys-262, Cys-264/Cys-273, Cys-280/Cys-291, Cys-285/Cys-300, Cys-302/Cys-311, Cys-318/Cys-332, Cys-326/Cys-341, Cys-343/Cys-352, Cys-359/Cys-370, Cys-364/Cys-379, Cys-381/Cys-390, Cys-396/Cys-407, Cys-401/Cys-418, Cys-420/Cys-429, Cys-436/Cys-452, Cys-446/Cys-461, Cys-463/Cys-472, Cys-479/Cys-490, Cys-484/Cys-499, Cys-501/Cys-510, Cys-517/Cys-528, Cys-522/Cys-537, Cys-539/Cys-548, Cys-555/Cys-566, Cys-560/Cys-575, Cys-577/Cys-586, Cys-593/Cys-604, Cys-598/Cys-613, Cys-615/Cys-624, Cys-629/Cys-640, Cys-634/Cys-649, and Cys-651/Cys-658. The 39-residue stretch at 194–232 (DVNECFQDPGPCPKGTSCHNTLGSFQCLCPVGQEGPRCE) folds into the EGF-like 5; calcium-binding domain. In terms of domain architecture, EGF-like 6 spans 234–274 (RAGPCPPRGCSNGGTCQLMPEKDSTFHLCLCPPGFIGPDCE). The 37-residue stretch at 276-312 (NPDNCVSHQCQNGGTCQDGLDTYTCLCPETWTGWDCS) folds into the EGF-like 7; calcium-binding domain. Positions 314 to 353 (DVDECETQGPPHCRNGGTCQNSAGSFHCVCVSGWGGTSCE) constitute an EGF-like 8; calcium-binding domain. Residues 355–391 (NLDDCIAATCAPGSTCIDRVGSFSCLCPPGRTGLLCH) form the EGF-like 9; calcium-binding domain. One can recognise an EGF-like 10 domain in the interval 392–430 (LEDMCLSQPCHGDAQCSTNPLTGSTLCLCQPGYSGPTCH). Residues 432-473 (DLDECLMAQQGPSPCEHGGSCLNTPGSFNCLCPPGYTGSRCE) form the EGF-like 11; calcium-binding domain. The EGF-like 12; calcium-binding domain maps to 475-511 (DHNECLSQPCHPGSTCLDLLATFHCLCPPGLEGQLCE). The region spanning 513 to 549 (ETNECASAPCLNHADCHDLLNGFQCICLPGFSGTRCE) is the EGF-like 13; calcium-binding domain. Residues 551 to 587 (DIDECRSSPCANGGQCQDQPGAFHCKCLPGFEGPRCQ) form the EGF-like 14; calcium-binding domain. Residues 589 to 625 (EVDECLSDPCPVGASCLDLPGAFFCLCPSGFTGQLCE) enclose the EGF-like 15; calcium-binding domain. 14 consecutive EGF-like domains span residues 626–659 (VPLC…PGCA), 661–689 (PEDN…PECE), 691–727 (ELGG…PTCS), 729–765 (EMTA…PQCQ), 767–803 (STDY…PRCE), 806–842 (LRPS…GSCQ), 844–880 (LMDL…PLCN), 882–928 (PLSS…SLCQ), 930–966 (HVNP…QNCS), 968–1004 (ELDA…LRCE), 1006–1044 (DVDE…QWCE), 1046–1085 (EIDP…PTCS), 1087–1126 (RAPS…PDCL), and 1130–1171 (APKG…PRCQ). A glycan (N-linked (GlcNAc...) asparagine) is linked at Asn-664. 47 disulfides stabilise this stretch: Cys-665–Cys-672, Cys-667–Cys-677, Cys-679–Cys-688, Cys-695–Cys-706, Cys-700–Cys-715, Cys-717–Cys-726, Cys-733–Cys-744, Cys-738–Cys-753, Cys-755–Cys-764, Cys-771–Cys-782, Cys-776–Cys-791, Cys-793–Cys-802, Cys-810–Cys-821, Cys-815–Cys-830, Cys-832–Cys-841, Cys-848–Cys-859, Cys-853–Cys-868, Cys-870–Cys-879, Cys-886–Cys-907, Cys-901–Cys-916, Cys-918–Cys-927, Cys-934–Cys-945, Cys-939–Cys-954, Cys-956–Cys-965, Cys-972–Cys-983, Cys-977–Cys-992, Cys-994–Cys-1003, Cys-1010–Cys-1023, Cys-1015–Cys-1032, Cys-1034–Cys-1043, Cys-1050–Cys-1061, Cys-1055–Cys-1073, Cys-1075–Cys-1084, Cys-1091–Cys-1102, Cys-1096–Cys-1114, Cys-1116–Cys-1125, Cys-1134–Cys-1146, Cys-1140–Cys-1159, Cys-1161–Cys-1170, Cys-1178–Cys-1191, Cys-1187–Cys-1203, Cys-1214–Cys-1238, Cys-1220–Cys-1233, Cys-1229–Cys-1245, Cys-1251–Cys-1277, Cys-1259–Cys-1272, and Cys-1268–Cys-1284. Asn-714 is a glycosylation site (N-linked (GlcNAc...) asparagine). Asn-964 carries an N-linked (GlcNAc...) asparagine glycan. The N-linked (GlcNAc...) asparagine glycan is linked to Asn-1143. LNR repeat units lie at residues 1170–1213 (CQKP…PWKG), 1214–1250 (CPSH…TPPA), and 1251–1294 (CTPA…PEWG). Residues 1347–1371 (AEEKLGGTRDPTYQERAAPQTQPLG) form a disordered region. A helical membrane pass occupies residues 1448 to 1468 (PVLCSPVAGVILLALGALLVL). The Cytoplasmic segment spans residues 1469–2003 (QLIRRRRREH…PINQGGEGKK (535 aa)). Positions 1485–1508 (PGFTRRPRTQSAPHRRRPPLGEDS) are disordered. Residues 1489–1502 (RRPRTQSAPHRRRP) show a composition bias toward basic residues. ANK repeat units lie at residues 1633–1665 (TGET…QPDR), 1666–1698 (AGRT…DART), 1700–1732 (DGTT…ARDK), 1733–1765 (WGKT…AQDN), and 1766–1798 (REQT…LRDQ). Disordered stretches follow at residues 1900–1927 (LSGV…RPNP) and 1968–2003 (PPPC…EGKK).

The protein belongs to the NOTCH family. In terms of assembly, heterodimer of a C-terminal fragment N(TM) and a N-terminal fragment N(EC) which are probably linked by disulfide bonds. Interacts with MAML1, MAML2 and MAML3 which act as transcriptional coactivators for NOTCH4. (Microbial infection) Interacts with Epstein-Barr virus (EBV) RK-BARF0. In terms of processing, synthesized in the endoplasmic reticulum as an inactive form which is proteolytically cleaved by a furin-like convertase in the trans-Golgi network before it reaches the plasma membrane to yield an active, ligand-accessible form. Cleavage results in a C-terminal fragment N(TM) and a N-terminal fragment N(EC). Following ligand binding, it is cleaved by TNF-alpha converting enzyme (TACE) to yield a membrane-associated intermediate fragment called notch extracellular truncation (NEXT). This fragment is then cleaved by presenilin dependent gamma-secretase to release a notch-derived peptide containing the intracellular domain (NICD) from the membrane. Post-translationally, phosphorylated. Highly expressed in the heart, moderately in the lung and placenta and at low levels in the liver, skeletal muscle, kidney, pancreas, spleen, lymph node, thymus, bone marrow and fetal liver. No expression was seen in adult brain or peripheral blood leukocytes.

The protein localises to the cell membrane. The protein resides in the nucleus. In terms of biological role, functions as a receptor for membrane-bound ligands Jagged1, Jagged2 and Delta1 to regulate cell-fate determination. Upon ligand activation through the released notch intracellular domain (NICD) it forms a transcriptional activator complex with RBPJ/RBPSUH and activates genes of the enhancer of split locus. Affects the implementation of differentiation, proliferation and apoptotic programs. May regulate branching morphogenesis in the developing vascular system. This Homo sapiens (Human) protein is Neurogenic locus notch homolog protein 4.